A 61-amino-acid chain; its full sequence is Photosystem II reaction center protein K (61 aa).

Residues 1 to 24 (MLNILNLICICLNFALYSSSFFFT) constitute a propeptide that is removed on maturation. Residues 40 to 60 (MPVIPLFFFLLAFVWQAAVSF) traverse the membrane as a helical segment.

The protein belongs to the PsbK family. PSII is composed of 1 copy each of membrane proteins PsbA, PsbB, PsbC, PsbD, PsbE, PsbF, PsbH, PsbI, PsbJ, PsbK, PsbL, PsbM, PsbT, PsbX, PsbY, PsbZ, Psb30/Ycf12, at least 3 peripheral proteins of the oxygen-evolving complex and a large number of cofactors. It forms dimeric complexes.

It localises to the plastid. Its subcellular location is the chloroplast thylakoid membrane. Its function is as follows. One of the components of the core complex of photosystem II (PSII). PSII is a light-driven water:plastoquinone oxidoreductase that uses light energy to abstract electrons from H(2)O, generating O(2) and a proton gradient subsequently used for ATP formation. It consists of a core antenna complex that captures photons, and an electron transfer chain that converts photonic excitation into a charge separation. This is Photosystem II reaction center protein K from Populus alba (White poplar).